The following is a 249-amino-acid chain: 2,3-bisphosphoglycerate-dependent phosphoglycerate mutase 2 (249 aa).

Residues 8 to 15, 21 to 22, Arg60, 87 to 90, Lys98, 114 to 115, and 183 to 184 contribute to the substrate site; these read RHGESIWN, TG, ERHY, RR, and GN. His9 serves as the catalytic Tele-phosphohistidine intermediate. Glu87 functions as the Proton donor/acceptor in the catalytic mechanism.

This sequence belongs to the phosphoglycerate mutase family. BPG-dependent PGAM subfamily. Homodimer.

It catalyses the reaction (2R)-2-phosphoglycerate = (2R)-3-phosphoglycerate. Its pathway is carbohydrate degradation; glycolysis; pyruvate from D-glyceraldehyde 3-phosphate: step 3/5. Functionally, catalyzes the interconversion of 2-phosphoglycerate and 3-phosphoglycerate. This Nitrosomonas europaea (strain ATCC 19718 / CIP 103999 / KCTC 2705 / NBRC 14298) protein is 2,3-bisphosphoglycerate-dependent phosphoglycerate mutase 2.